Reading from the N-terminus, the 292-residue chain is 11-beta-hydroxysteroid dehydrogenase 1 (292 aa).

The helical transmembrane segment at 7 to 24 threads the bilayer; sequence YLLPILGIFLAYYYYSAN.

It belongs to the short-chain dehydrogenases/reductases (SDR) family. In terms of assembly, homodimer. As to expression, expressed highest in liver and ovaries (corpora lutea, granulosa cells, thecal, uterine caruncle and intercarunculer tissues), lower expression in kidney and spleen, and lowest in the adrenal.

Its subcellular location is the endoplasmic reticulum membrane. It catalyses the reaction an 11beta-hydroxysteroid + NADP(+) = an 11-oxosteroid + NADPH + H(+). The enzyme catalyses corticosterone + NADP(+) = 11-dehydrocorticosterone + NADPH + H(+). It carries out the reaction cortisone + NADPH + H(+) = cortisol + NADP(+). The catalysed reaction is a 7beta-hydroxysteroid + NADP(+) = a 7-oxosteroid + NADPH + H(+). It catalyses the reaction 7-oxocholesterol + NADPH + H(+) = 7beta-hydroxycholesterol + NADP(+). The enzyme catalyses chenodeoxycholate + NADP(+) = 7-oxolithocholate + NADPH + H(+). It carries out the reaction 7-oxolithocholate + NADPH + H(+) = ursodeoxycholate + NADP(+). The catalysed reaction is glycochenodeoxycholate + NADP(+) = 7-oxoglycolithocholate + NADPH + H(+). It catalyses the reaction taurochenodeoxycholate + NADP(+) = 7-oxotaurolithocholate + NADPH + H(+). The enzyme catalyses tauroursodeoxycholate + NADP(+) = 7-oxotaurolithocholate + NADPH + H(+). It carries out the reaction glycoursodeoxycholate + NADP(+) = 7-oxoglycolithocholate + NADPH + H(+). The catalysed reaction is 7-oxopregnenolone + NADPH + H(+) = 7beta-hydroxypregnenolone + NADP(+). It catalyses the reaction 3beta,7alpha-dihydroxyandrost-5-en-17-one + NADP(+) = 3beta-hydroxy-5-androstene-7,17-dione + NADPH + H(+). The enzyme catalyses 3beta-hydroxy-5-androstene-7,17-dione + NADPH + H(+) = 3beta,7beta-dihydroxyandrost-5-en-17-one + NADP(+). It carries out the reaction 3beta-hydroxy-5alpha-androstane-7,17-dione + NADPH + H(+) = 3beta,7beta-dihydroxy-5alpha-androstan-17-one + NADP(+). Controls the reversible conversion of biologically active glucocorticoids such as cortisone to cortisol, and 11-dehydrocorticosterone to corticosterone in the presence of NADP(H). Participates in the corticosteroid receptor-mediated anti-inflammatory response, as well as metabolic and homeostatic processes. Plays a role in the secretion of aqueous humor in the eye, maintaining a normotensive, intraocular environment. Bidirectional in vitro, predominantly functions as a reductase in vivo, thereby increasing the concentration of active glucocorticoids. It has broad substrate specificity, besides glucocorticoids, it accepts other steroid and sterol substrates. Interconverts 7-oxo- and 7-hydroxy-neurosteroids such as 7-oxopregnenolone and 7beta-hydroxypregnenolone, 7-oxodehydroepiandrosterone (3beta-hydroxy-5-androstene-7,17-dione) and 7beta-hydroxydehydroepiandrosterone (3beta,7beta-dihydroxyandrost-5-en-17-one), among others. Catalyzes the stereo-specific conversion of the major dietary oxysterol, 7-ketocholesterol (7-oxocholesterol), into the more polar 7-beta-hydroxycholesterol metabolite. 7-oxocholesterol is one of the most important oxysterols, it participates in several events such as induction of apoptosis, accumulation in atherosclerotic lesions, lipid peroxidation, and induction of foam cell formation. Mediates the 7-oxo reduction of 7-oxolithocholate mainly to chenodeoxycholate, and to a lesser extent to ursodeoxycholate, both in its free form and when conjugated to glycine or taurine, providing a link between glucocorticoid activation and bile acid metabolism. Catalyzes the synthesis of 7-beta-25-dihydroxycholesterol from 7-oxo-25-hydroxycholesterol in vitro, which acts as a ligand for the G-protein-coupled receptor (GPCR) Epstein-Barr virus-induced gene 2 (EBI2) and may thereby regulate immune cell migration. The chain is 11-beta-hydroxysteroid dehydrogenase 1 from Bos taurus (Bovine).